The primary structure comprises 100 residues: Colipase-like protein 2 (100 aa).

A signal peptide spans 1–21 (MAAALALVAGVLSGAVLPLWS). 5 disulfides stabilise this stretch: cysteine 34-cysteine 45, cysteine 40-cysteine 56, cysteine 44-cysteine 78, cysteine 66-cysteine 86, and cysteine 80-cysteine 97.

Belongs to the colipase family.

The protein resides in the secreted. This Homo sapiens (Human) protein is Colipase-like protein 2 (CLPSL2).